A 118-amino-acid polypeptide reads, in one-letter code: Basic phospholipase A2 PA-12A (118 aa).

7 disulfide bridges follow: Cys-11–Cys-71, Cys-27–Cys-117, Cys-29–Cys-45, Cys-44–Cys-98, Cys-51–Cys-91, Cys-60–Cys-84, and Cys-78–Cys-89. The Ca(2+) site is built by Tyr-28, Gly-30, and Gly-32. Residue His-48 is part of the active site. Ca(2+) is bound at residue Asp-49. Residue Asp-92 is part of the active site.

It belongs to the phospholipase A2 family. Group I subfamily. D49 sub-subfamily. It depends on Ca(2+) as a cofactor. Expressed by the venom gland.

It is found in the secreted. It carries out the reaction a 1,2-diacyl-sn-glycero-3-phosphocholine + H2O = a 1-acyl-sn-glycero-3-phosphocholine + a fatty acid + H(+). In terms of biological role, PLA2 catalyzes the calcium-dependent hydrolysis of the 2-acyl groups in 3-sn-phosphoglycerides. This Pseudechis australis (Mulga snake) protein is Basic phospholipase A2 PA-12A.